We begin with the raw amino-acid sequence, 90 residues long: Envelope glycoprotein N (90 aa).

The signal sequence occupies residues 1–21; sequence MTWKLFICFLSFGVIFLRVSS. Over 22–55 the chain is Virion surface; that stretch reads LTEKSHTTSYTILHNNNFYSNSCSADTYVPSIKT. Residues 56–76 traverse the membrane as a helical segment; that stretch reads FSSVWAILNVIIFFCASLFYL. The Intravirion portion of the chain corresponds to 77-90; the sequence is RHLCIVKFISNLTK.

This sequence belongs to the herpesviridae glycoprotein N family. Interacts (via N-terminus) with gM (via N-terminus). The gM-gN heterodimer forms the gCII complex.

The protein localises to the virion membrane. Its subcellular location is the host membrane. It is found in the host Golgi apparatus. The protein resides in the host trans-Golgi network. Its function is as follows. Envelope glycoprotein necessary for proper maturation of gM and modulation of its membrane fusion activity. Also plays a critical role in virion morphogenesis. The chain is Envelope glycoprotein N from Saimiriine herpesvirus 2 (strain 11) (SaHV-2).